The chain runs to 1172 residues: DNA-directed RNA polymerase subunit beta (1172 aa).

It belongs to the RNA polymerase beta chain family. The RNAP catalytic core consists of 2 alpha, 1 beta, 1 beta' and 1 omega subunit. When a sigma factor is associated with the core the holoenzyme is formed, which can initiate transcription.

The enzyme catalyses RNA(n) + a ribonucleoside 5'-triphosphate = RNA(n+1) + diphosphate. In terms of biological role, DNA-dependent RNA polymerase catalyzes the transcription of DNA into RNA using the four ribonucleoside triphosphates as substrates. This Thermosipho melanesiensis (strain DSM 12029 / CIP 104789 / BI429) protein is DNA-directed RNA polymerase subunit beta.